The following is a 235-amino-acid chain: LexA repressor (235 aa).

The H-T-H motif DNA-binding region spans 26-46; the sequence is FDEMKDALDLKSKSGIHRLIT. Residues serine 156 and lysine 194 each act as for autocatalytic cleavage activity in the active site.

It belongs to the peptidase S24 family. As to quaternary structure, homodimer.

The enzyme catalyses Hydrolysis of Ala-|-Gly bond in repressor LexA.. Functionally, represses a number of genes involved in the response to DNA damage (SOS response), including recA and lexA. In the presence of single-stranded DNA, RecA interacts with LexA causing an autocatalytic cleavage which disrupts the DNA-binding part of LexA, leading to derepression of the SOS regulon and eventually DNA repair. This chain is LexA repressor, found in Paramagnetospirillum magneticum (strain ATCC 700264 / AMB-1) (Magnetospirillum magneticum).